The chain runs to 433 residues: Staphylopine synthase (433 aa).

Residues 9-12, Arg-33, 37-40, and Asp-99 each bind NADP(+); these read TGPV and SEKS. His-216 (proton donor/acceptor) is an active-site residue.

It belongs to the staphylopine dehydrogenase family. In terms of assembly, homodimer.

It catalyses the reaction staphylopine + NADP(+) + H2O = (2S)-2-amino-4-{[(1R)-1-carboxy-2-(1H-imidazol-4-yl)ethyl]amino}butanoate + pyruvate + NADPH + H(+). Its function is as follows. Catalyzes the NADPH-dependent reductive condensation of pyruvate to the intermediate formed by the adjacently encoded enzyme CntL, namely (2S)-2-amino-4-{[(1R)-1-carboxy-2-(1H-imidazol-4-yl)ethyl]amino}butanoate, leading to the production of staphylopine. This is the last step in the biosynthesis of the metallophore staphylopine, which is involved in the acquisition of nickel, cobalt, zinc, copper, and iron, and thus enables bacterial growth inside the host, where metal access is limited. Therefore, this enzyme probably contributes to staphylococcal virulence. Can use neither NADH nor alpha-ketoglutarate in place of NADPH and pyruvate, respectively. The sequence is that of Staphylopine synthase from Staphylococcus aureus (strain Mu50 / ATCC 700699).